Reading from the N-terminus, the 227-residue chain is Ubiquitin domain-containing protein 1 (227 aa).

Residues 1–35 are disordered; that stretch reads MGNCVGRQRRERPAAPGHPRKRAGRNEPLKKERLK. Residues 24–35 are compositionally biased toward basic and acidic residues; that stretch reads GRNEPLKKERLK. The 76-residue stretch at 149–224 folds into the Ubiquitin-like domain; it reads FPLKVRLSTG…IQVIINQPPP (76 aa).

Interacts with UBTD1.

In terms of biological role, may be involved in the regulation of cellular senescence through a positive feedback loop with TP53. Is a TP53 downstream target gene that increases the stability of TP53 protein by promoting the ubiquitination and degradation of MDM2. This chain is Ubiquitin domain-containing protein 1 (UBTD1), found in Homo sapiens (Human).